The primary structure comprises 599 residues: Elongation factor 4 (599 aa).

The region spanning 2–184 (KNIRNFSIIA…RLVRDIPPPE (183 aa)) is the tr-type G domain. Residues 14-19 (DHGKST) and 131-134 (NKID) each bind GTP.

It belongs to the TRAFAC class translation factor GTPase superfamily. Classic translation factor GTPase family. LepA subfamily.

The protein localises to the cell inner membrane. The enzyme catalyses GTP + H2O = GDP + phosphate + H(+). Required for accurate and efficient protein synthesis under certain stress conditions. May act as a fidelity factor of the translation reaction, by catalyzing a one-codon backward translocation of tRNAs on improperly translocated ribosomes. Back-translocation proceeds from a post-translocation (POST) complex to a pre-translocation (PRE) complex, thus giving elongation factor G a second chance to translocate the tRNAs correctly. Binds to ribosomes in a GTP-dependent manner. This chain is Elongation factor 4, found in Escherichia coli O8 (strain IAI1).